A 645-amino-acid chain; its full sequence is Zinc finger protein 235 (645 aa).

One can recognise a KRAB domain in the interval Val-8 to Arg-86. Disordered stretches follow at residues Gly-112–Ser-144 and Lys-255–Pro-280. The span at Leu-129 to Ser-144 shows a compositional bias: polar residues. 13 C2H2-type zinc fingers span residues Tyr-285–His-307, Tyr-313–His-335, Tyr-341–His-363, Tyr-369–His-391, Tyr-397–His-419, Tyr-425–His-447, Phe-453–His-475, Tyr-481–His-503, Tyr-509–His-531, Phe-537–His-559, Tyr-565–His-587, Phe-593–His-615, and Tyr-621–His-643.

It belongs to the krueppel C2H2-type zinc-finger protein family.

The protein resides in the nucleus. Functionally, may be involved in transcriptional regulation. This is Zinc finger protein 235 (Znf235) from Mus musculus (Mouse).